The following is a 196-amino-acid chain: Nitrogen regulatory protein P-II homolog (196 aa).

The N-terminal 61 residues, 1-61, are a transit peptide targeting the chloroplast; it reads MAASMTKPIS…NNSRVLPVVS (61 aa). Residues 108–112 and 161–164 each bind ATP; these read GFGAQ and GDGK. Position 110 (Gly110) interacts with Mg(2+).

This sequence belongs to the P(II) protein family. Homodimer. Interacts with NAGK. Interaction with NAGK is dependent of MgATP and inhibited by 2-oxoglutarate, arginine, glutamate, citrate, and oxaloacetate.

It localises to the plastid. The protein resides in the chloroplast. Functionally, participates in sensing carbon and organic nitrogen status and regulates some steps of primary carbon and nitrogen metabolism. Required for nitrite uptake in chloroplasts and regulates arginine biosynthesis through interaction with acetylglutamate kinase (NAGK) in chloroplasts. Regulates fatty acids synthesis in chloroplasts by interacting with the acetyl-CoA carboxylase complex and inhibiting acetyl-CoA carboxylase (ACCase) activity. The sequence is that of Nitrogen regulatory protein P-II homolog (GLB1) from Arabidopsis thaliana (Mouse-ear cress).